We begin with the raw amino-acid sequence, 427 residues long: F-box protein At2g16450 (427 aa).

Residues 1-45 (MNPSPITIDLILEILSRLPAKSVRRFHCVSKRWASIFGSPYFKEL) form the F-box domain.

In Arabidopsis thaliana (Mouse-ear cress), this protein is F-box protein At2g16450.